The chain runs to 282 residues: Anamorsin homolog (282 aa).

The segment at 5 to 151 (VDTNNFVLLL…EVGAKTALSL (147 aa)) is N-terminal SAM-like domain. The tract at residues 152-196 (SFAPKPAQPKAETSAAQIWTLSAQDIDDEDVDLLDSDTLLDEDDL) is linker. [2Fe-2S] cluster contacts are provided by Cys208, Cys218, Cys221, and Cys223. The interval 208 to 223 (CGPGSGKKKACKNCTC) is fe-S binding site A. Residues Cys243, Cys246, Cys254, and Cys257 each contribute to the [4Fe-4S] cluster site. 2 short sequence motifs (cx2C motif) span residues 243–246 (CGSC) and 254–257 (CSTC). The interval 243-257 (CGSCYLGDAFRCSTC) is fe-S binding site B.

The protein belongs to the anamorsin family. In terms of assembly, monomer. It depends on [2Fe-2S] cluster as a cofactor. The cofactor is [4Fe-4S] cluster.

The protein localises to the cytoplasm. The protein resides in the mitochondrion intermembrane space. Functionally, component of the cytosolic iron-sulfur (Fe-S) protein assembly (CIA) machinery. Required for the maturation of extramitochondrial Fe-S proteins. Part of an electron transfer chain functioning in an early step of cytosolic Fe-S biogenesis, facilitating the de novo assembly of a [4Fe-4S] cluster on the cytosolic Fe-S scaffold complex. Electrons are transferred from NADPH via a FAD- and FMN-containing diflavin oxidoreductase. Together with the diflavin oxidoreductase, also required for the assembly of the diferric tyrosyl radical cofactor of ribonucleotide reductase (RNR), probably by providing electrons for reduction during radical cofactor maturation in the catalytic small subunit. In Nematostella vectensis (Starlet sea anemone), this protein is Anamorsin homolog.